The chain runs to 84 residues: Small ribosomal subunit protein uS17 (84 aa).

It belongs to the universal ribosomal protein uS17 family. As to quaternary structure, part of the 30S ribosomal subunit.

Its function is as follows. One of the primary rRNA binding proteins, it binds specifically to the 5'-end of 16S ribosomal RNA. The polypeptide is Small ribosomal subunit protein uS17 (Clostridium botulinum (strain ATCC 19397 / Type A)).